The primary structure comprises 507 residues: MEILVPGQATLAQLEAIWREGRRARLAPEARPAVEAAAARVAAAAAGTAPVYGVNTGFGKLASLKIAPADTAQLQRNLILSHCCGVGEPMPPSTARLMMALKLLSLGRGASGVRWKIVALLEGMLAAGVTPVIPAQGSVGASGDLAPLAHMAAVMIGEGEAEVGGRRLPGAAALAHAGLAPVALGPKEGLALINGTQFSTAYALAGLFEGWRAAQAALVISALSTDAIMGSTAPLRPEIHALRGHAGQIEAAATMRALLEGSAIRESHREGDQRVQDPYCIRCQPQVTGAAMDVLRMAAGTLATEANAATDNPLVLSDGRIVSGGNFHAEPVGFAADMIALALSEIGAIAQRRVALMVDPTLSFDLPPFLTPEPGLNSGLMIAEVTTAALMSENKHMAAPTVTDSTPTSANQEDHVSMAAHGARRLGRMVENLAVILGTEAICAAQGVEFRAPLATSAPLGAVLARLRAEVPRLGADRILAPDLAAAARLVRTGALARAAGLPLPAL.

A cross-link (5-imidazolinone (Ala-Gly)) is located at residues 141 to 143 (ASG). 2,3-didehydroalanine (Ser) is present on Ser142.

Belongs to the PAL/histidase family. In terms of processing, contains an active site 4-methylidene-imidazol-5-one (MIO), which is formed autocatalytically by cyclization and dehydration of residues Ala-Ser-Gly.

The protein localises to the cytoplasm. It catalyses the reaction L-histidine = trans-urocanate + NH4(+). It participates in amino-acid degradation; L-histidine degradation into L-glutamate; N-formimidoyl-L-glutamate from L-histidine: step 1/3. This is Histidine ammonia-lyase from Cereibacter sphaeroides (strain KD131 / KCTC 12085) (Rhodobacter sphaeroides).